Consider the following 273-residue polypeptide: NAD-dependent protein deacylase (273 aa).

The Deacetylase sirtuin-type domain occupies 1–269 (MNLDNAIHEA…PRIVEQVKKI (269 aa)). Residues 25–44 (GAGV…GGVW) and 107–110 (QNID) contribute to the NAD(+) site. Catalysis depends on histidine 125, which acts as the Proton acceptor. Zn(2+)-binding residues include cysteine 133, cysteine 136, cysteine 173, and cysteine 176. Residues 211–213 (GTS), 237–239 (NPN), and threonine 255 contribute to the NAD(+) site.

This sequence belongs to the sirtuin family. Class III subfamily. Requires Zn(2+) as cofactor.

It localises to the cytoplasm. It carries out the reaction N(6)-acetyl-L-lysyl-[protein] + NAD(+) + H2O = 2''-O-acetyl-ADP-D-ribose + nicotinamide + L-lysyl-[protein]. Functionally, NAD-dependent protein deacetylase which modulates the activities of several proteins which are inactive in their acetylated form. The chain is NAD-dependent protein deacylase (cobB) from Desulfosudis oleivorans (strain DSM 6200 / JCM 39069 / Hxd3) (Desulfococcus oleovorans).